The chain runs to 55 residues: Large ribosomal subunit protein bL33 (55 aa).

This sequence belongs to the bacterial ribosomal protein bL33 family. As to quaternary structure, part of the 50S ribosomal subunit. Contacts protein L35.

Its function is as follows. Binds the 23S rRNA and the E site tRNA. The sequence is that of Large ribosomal subunit protein bL33 (rpmG) from Deinococcus radiodurans (strain ATCC 13939 / DSM 20539 / JCM 16871 / CCUG 27074 / LMG 4051 / NBRC 15346 / NCIMB 9279 / VKM B-1422 / R1).